We begin with the raw amino-acid sequence, 296 residues long: Mycothiol acetyltransferase (296 aa).

N-acetyltransferase domains follow at residues 1–148 and 151–296; these read MTEW…IRVD and VTVR…YGRA. E34 is a binding site for 1D-myo-inositol 2-(L-cysteinylamino)-2-deoxy-alpha-D-glucopyranoside. Acetyl-CoA-binding positions include 79–81 and 87–92; these read LVV and RRGIGS. Residues E178, K219, and E229 each coordinate 1D-myo-inositol 2-(L-cysteinylamino)-2-deoxy-alpha-D-glucopyranoside. Acetyl-CoA contacts are provided by residues 233–235 and 240–246; these read VGV and QGRGLGH. Y267 lines the 1D-myo-inositol 2-(L-cysteinylamino)-2-deoxy-alpha-D-glucopyranoside pocket. 272–277 is a binding site for acetyl-CoA; it reads NQAALR.

It belongs to the acetyltransferase family. MshD subfamily. Monomer.

It catalyses the reaction 1D-myo-inositol 2-(L-cysteinylamino)-2-deoxy-alpha-D-glucopyranoside + acetyl-CoA = mycothiol + CoA + H(+). Functionally, catalyzes the transfer of acetyl from acetyl-CoA to desacetylmycothiol (Cys-GlcN-Ins) to form mycothiol. This is Mycothiol acetyltransferase from Mycobacteroides abscessus (strain ATCC 19977 / DSM 44196 / CCUG 20993 / CIP 104536 / JCM 13569 / NCTC 13031 / TMC 1543 / L948) (Mycobacterium abscessus).